Here is a 260-residue protein sequence, read N- to C-terminus: 5'-nucleotidase SurE (260 aa).

D8, D9, S39, and N96 together coordinate a divalent metal cation.

Belongs to the SurE nucleotidase family. The cofactor is a divalent metal cation.

The protein resides in the cytoplasm. It carries out the reaction a ribonucleoside 5'-phosphate + H2O = a ribonucleoside + phosphate. In terms of biological role, nucleotidase that shows phosphatase activity on nucleoside 5'-monophosphates. The protein is 5'-nucleotidase SurE of Moorella thermoacetica (strain ATCC 39073 / JCM 9320).